The primary structure comprises 689 residues: Beta-galactosidase Pbg (689 aa).

A substrate-binding site is contributed by arginine 118. Zn(2+) is bound at residue cysteine 122. Asparagine 156 is a binding site for substrate. The Proton donor role is filled by glutamate 157. Cysteine 162, cysteine 164, and cysteine 167 together coordinate Zn(2+). Glutamate 318 acts as the Nucleophile in catalysis. Residues tryptophan 326 and 366 to 369 (EKFH) each bind substrate.

Belongs to the glycosyl hydrolase 42 family.

The enzyme catalyses Hydrolysis of terminal non-reducing beta-D-galactose residues in beta-D-galactosides.. The protein is Beta-galactosidase Pbg of Clostridium perfringens (strain ATCC 13124 / DSM 756 / JCM 1290 / NCIMB 6125 / NCTC 8237 / Type A).